Here is a 505-residue protein sequence, read N- to C-terminus: tRNA-2-methylthio-N(6)-dimethylallyladenosine synthase (505 aa).

The region spanning 14-132 is the MTTase N-terminal domain; it reads RTYEVRTYGC…LPVLLERARV (119 aa). [4Fe-4S] cluster is bound by residues cysteine 23, cysteine 61, cysteine 95, cysteine 169, cysteine 173, and cysteine 176. Positions 155–386 constitute a Radical SAM core domain; sequence RESAYAAWVS…ALQEEISWEE (232 aa). The 69-residue stretch at 388 to 456 folds into the TRAM domain; sequence KKQVGRTLEL…PHHLLAEGPV (69 aa).

It belongs to the methylthiotransferase family. MiaB subfamily. In terms of assembly, monomer. It depends on [4Fe-4S] cluster as a cofactor.

It is found in the cytoplasm. It catalyses the reaction N(6)-dimethylallyladenosine(37) in tRNA + (sulfur carrier)-SH + AH2 + 2 S-adenosyl-L-methionine = 2-methylsulfanyl-N(6)-dimethylallyladenosine(37) in tRNA + (sulfur carrier)-H + 5'-deoxyadenosine + L-methionine + A + S-adenosyl-L-homocysteine + 2 H(+). Its function is as follows. Catalyzes the methylthiolation of N6-(dimethylallyl)adenosine (i(6)A), leading to the formation of 2-methylthio-N6-(dimethylallyl)adenosine (ms(2)i(6)A) at position 37 in tRNAs that read codons beginning with uridine. The protein is tRNA-2-methylthio-N(6)-dimethylallyladenosine synthase of Streptomyces viridosporus (strain ATCC 14672 / DSM 40746 / JCM 4963 / KCTC 9882 / NRRL B-12104 / FH 1290) (Streptomyces ghanaensis).